The chain runs to 352 residues: ER-derived vesicles protein ERV41 (352 aa).

Over 1–23 (MAGLKTFDAFPKTEEQYKKKSTK) the chain is Cytoplasmic. The helical transmembrane segment at 24-44 (GGLTSLLTYLFLLFIAWTEFG) threads the bilayer. Residues 45–311 (EYFGGYIDQQ…FLVRLVAICS (267 aa)) are Lumenal-facing. The chain crosses the membrane as a helical span at residues 312–332 (FLVYCASWIFTLLDMALITIM). The Cytoplasmic portion of the chain corresponds to 333–352 (GPKWSLRYQPDDKTKGILDR). An Isoleucine-leucine motif motif is present at residues 349–350 (IL).

It belongs to the ERGIC family. In terms of assembly, interacts with ERV46.

It localises to the endoplasmic reticulum membrane. The protein localises to the golgi apparatus membrane. It is found in the cytoplasmic vesicle. The protein resides in the COPII-coated vesicle membrane. Its function is as follows. Constituent of COPII-coated endoplasmic reticulum-derived transport vesicles. Required for efficient transport of a subset of secretory proteins to the Golgi. The C-terminal Ile-Leu motif is required for exit from the endoplasmic reticulum. Facilitates retrograde transport from the Golgi to the endoplasmic reticulum. This chain is ER-derived vesicles protein ERV41 (ERV41), found in Saccharomyces cerevisiae (strain ATCC 204508 / S288c) (Baker's yeast).